A 346-amino-acid polypeptide reads, in one-letter code: Glycerol-3-phosphate dehydrogenase [NAD(P)+] (346 aa).

NADPH-binding residues include serine 15, tryptophan 16, arginine 36, and lysine 110. 3 residues coordinate sn-glycerol 3-phosphate: lysine 110, glycine 139, and serine 141. Alanine 143 provides a ligand contact to NADPH. Positions 194, 247, 257, 258, and 259 each coordinate sn-glycerol 3-phosphate. Lysine 194 functions as the Proton acceptor in the catalytic mechanism. Arginine 258 lines the NADPH pocket. The NADPH site is built by valine 282 and glutamate 284.

The protein belongs to the NAD-dependent glycerol-3-phosphate dehydrogenase family.

It is found in the cytoplasm. The enzyme catalyses sn-glycerol 3-phosphate + NAD(+) = dihydroxyacetone phosphate + NADH + H(+). The catalysed reaction is sn-glycerol 3-phosphate + NADP(+) = dihydroxyacetone phosphate + NADPH + H(+). It functions in the pathway membrane lipid metabolism; glycerophospholipid metabolism. Functionally, catalyzes the reduction of the glycolytic intermediate dihydroxyacetone phosphate (DHAP) to sn-glycerol 3-phosphate (G3P), the key precursor for phospholipid synthesis. In Xylella fastidiosa (strain Temecula1 / ATCC 700964), this protein is Glycerol-3-phosphate dehydrogenase [NAD(P)+].